A 689-amino-acid polypeptide reads, in one-letter code: Glycine--tRNA ligase beta subunit (689 aa).

It belongs to the class-II aminoacyl-tRNA synthetase family. In terms of assembly, tetramer of two alpha and two beta subunits.

The protein localises to the cytoplasm. It carries out the reaction tRNA(Gly) + glycine + ATP = glycyl-tRNA(Gly) + AMP + diphosphate. In Dichelobacter nodosus (strain VCS1703A), this protein is Glycine--tRNA ligase beta subunit.